The chain runs to 94 residues: Large ribosomal subunit protein eL33 (94 aa).

The protein belongs to the eukaryotic ribosomal protein eL33 family.

The chain is Large ribosomal subunit protein eL33 from Aeropyrum pernix (strain ATCC 700893 / DSM 11879 / JCM 9820 / NBRC 100138 / K1).